Here is a 1423-residue protein sequence, read N- to C-terminus: DNA-directed RNA polymerase, mitochondrial (1423 aa).

The transit peptide at 1 to 73 (MLPRTASATR…RATVGFERHL (73 aa)) directs the protein to the mitochondrion. The interval 266-303 (NMPDNVDPDTFAQQQQQQQQQQQQQQEQQQQQDTSIDQ) is disordered. Residues 278 to 297 (QQQQQQQQQQQQQQEQQQQQ) show a composition bias toward low complexity. Catalysis depends on residues Asp901 and Lys970. Residues 1055–1064 (EFERSERSPH) show a composition bias toward basic and acidic residues. A disordered region spans residues 1055 to 1087 (EFERSERSPHGDGTASGENITLAGNPRKSSAHK). The active site involves Asp1180. The disordered stretch occupies residues 1316-1342 (VRRGREMDEEGEVDGSEEAVEHEDGMH). Over residues 1322 to 1336 (MDEEGEVDGSEEAVE) the composition is skewed to acidic residues.

This sequence belongs to the phage and mitochondrial RNA polymerase family.

It is found in the mitochondrion. The enzyme catalyses RNA(n) + a ribonucleoside 5'-triphosphate = RNA(n+1) + diphosphate. In terms of biological role, DNA-dependent RNA polymerase catalyzes the transcription of DNA into RNA using the four ribonucleoside triphosphates as substrates. The polypeptide is DNA-directed RNA polymerase, mitochondrial (cyt-5) (Neurospora crassa (strain ATCC 24698 / 74-OR23-1A / CBS 708.71 / DSM 1257 / FGSC 987)).